Reading from the N-terminus, the 98-residue chain is UPF0235 protein Ping_3043 (98 aa).

This sequence belongs to the UPF0235 family.

The polypeptide is UPF0235 protein Ping_3043 (Psychromonas ingrahamii (strain DSM 17664 / CCUG 51855 / 37)).